The primary structure comprises 397 residues: Metallophosphoesterase 1 (397 aa).

Residues 27 to 47 (IAVVFAVLLFCEFLIYYLAIF) traverse the membrane as a helical segment. D77, D119, N157, H250, H304, and H306 together coordinate a divalent metal cation. A helical transmembrane segment spans residues 357–377 (VVLIIYCGMVGFLVVLTLTHF). Residues 393 to 397 (KRKTR) carry the Di-lysine motif motif.

The protein belongs to the metallophosphoesterase superfamily. MPPE1 family. In terms of assembly, interacts with GPI-anchor proteins (via the GPI portion). Interacts with TMED10. Mn(2+) serves as cofactor.

The protein resides in the endoplasmic reticulum-Golgi intermediate compartment membrane. In terms of biological role, metallophosphoesterase that catalyzes the removal of a side-chain ethanolamine-phosphate (EtNP) from the second mannose of the GPI-anchor protein intermediate. Participates in the glycan remodeling steps of GPI-anchor maturation to allow an efficient transport of GPI-anchor proteins from the endoplasmic reticulum to the Golgi. The chain is Metallophosphoesterase 1 from Pongo abelii (Sumatran orangutan).